Here is a 225-residue protein sequence, read N- to C-terminus: C-reactive protein (225 aa).

A signal peptide spans 1 to 18; the sequence is MLVVFLCLLSVTLEATEG. Residues 23 to 225 form the Pentraxin (PTX) domain; the sequence is SGKVLQFKTA…TGNVLVATDN (203 aa). Cys54 and Cys116 are oxidised to a cystine. The Ca(2+) site is built by Asp78, Asp157, Pro158, Asp159, and Gln169.

It belongs to the pentraxin family. Homotrimer. The cofactor is Ca(2+).

It is found in the secreted. Its function is as follows. Displays several functions associated with host defense: it promotes agglutination, bacterial capsular swelling, phagocytosis, and complement fixation through its calcium-dependent binding to phosphorylcholine. The protein is C-reactive protein of Danio rerio (Zebrafish).